Consider the following 501-residue polypeptide: Glucans biosynthesis protein G (501 aa).

An N-terminal signal peptide occupies residues 1–25 (MNRRQVLTGLAALPLLQAKPDPAAA).

It belongs to the OpgD/OpgG family.

It localises to the periplasm. The protein operates within glycan metabolism; osmoregulated periplasmic glucan (OPG) biosynthesis. Involved in the biosynthesis of osmoregulated periplasmic glucans (OPGs). In Rhodopseudomonas palustris (strain ATCC BAA-98 / CGA009), this protein is Glucans biosynthesis protein G.